A 516-amino-acid polypeptide reads, in one-letter code: tRNA-guanine(15) transglycosylase (516 aa).

Residue D93 is the Nucleophile of the active site. Positions 128 and 196 each coordinate substrate. Positions 279, 281, and 284 each coordinate Zn(2+). Residues L488–G502 show a composition bias toward low complexity. Residues L488–E516 form a disordered region.

The protein belongs to the archaeosine tRNA-ribosyltransferase family. It depends on Zn(2+) as a cofactor.

It carries out the reaction guanosine(15) in tRNA + 7-cyano-7-deazaguanine = 7-cyano-7-carbaguanosine(15) in tRNA + guanine. It participates in tRNA modification; archaeosine-tRNA biosynthesis. Functionally, exchanges the guanine residue with 7-cyano-7-deazaguanine (preQ0) at position 15 in the dihydrouridine loop (D-loop) of archaeal tRNAs. In Haloferax volcanii (strain ATCC 29605 / DSM 3757 / JCM 8879 / NBRC 14742 / NCIMB 2012 / VKM B-1768 / DS2) (Halobacterium volcanii), this protein is tRNA-guanine(15) transglycosylase.